The chain runs to 805 residues: Phenylalanine--tRNA ligase beta subunit (805 aa).

Positions 39–148 (APPFTGVVVA…AALRPGTDIR (110 aa)) constitute a tRNA-binding domain. In terms of domain architecture, B5 spans 399-474 (PVREPVRMRL…RVYGFERIPD (76 aa)). 4 residues coordinate Mg(2+): Asp-452, Asp-458, Glu-461, and Glu-462. The FDX-ACB domain occupies 703–804 (SRQPAVVRDL…LVAAHNARQR (102 aa)).

Belongs to the phenylalanyl-tRNA synthetase beta subunit family. Type 1 subfamily. In terms of assembly, tetramer of two alpha and two beta subunits. It depends on Mg(2+) as a cofactor.

Its subcellular location is the cytoplasm. The catalysed reaction is tRNA(Phe) + L-phenylalanine + ATP = L-phenylalanyl-tRNA(Phe) + AMP + diphosphate + H(+). The polypeptide is Phenylalanine--tRNA ligase beta subunit (Bordetella parapertussis (strain 12822 / ATCC BAA-587 / NCTC 13253)).